A 1076-amino-acid chain; its full sequence is MIMNPKIHNKILKNLAKLKKKVFTKYAAYDFNFAYDKNGNVYLVGVDNVTNQTFNLIKPVFKFLKKPLPAELYGMDQQPFYFVNNHHYIDALNSDTGEQELLRYNVIDQSLVNAQTNDLVDPAFYTDLEGYELDLSQYTGSLLDLSNEVISVEQQPVEQEVNLTPEQVEEAEQVEQQPVDQQQVQQVDPNLNEQPVEGDNQNFTQQYYDQQLGYADQNVDYGYDPQQYTQEQDYVDNTQQYDQVQDYVDPNQQYYDDQQQYDQQGYDQGYDQQYDQQGYDQQGYDQGYDQQYDQQYYDDQQQYDEQPDQQVKAVVEQVVDEVVEEQQPVEVAKPAPTKPVGPKPQPGKKATKYVIKKPEPKPKVVKEEPIEPAVEKEEVVTVVEQVVDQPVQVAEVQPEPVVVADDEIKLASEQPVKKKINLDDLQQIPVVIKLPKFETPKLPEPKADSEQKEEIAVKVVEQPVENPQVQETKHHHALPKVKIEKRQEVELVPSKLDDHYDLIEEEDDFFVDKFKFEDIKLSDLLVEQKPIEVNQPVQQPVVLEQSTPSVQAQPQSVEPKLEITKLEELVEIKTDNTESLNKLETLIDENKKIIDQFKQLKEEAKKSNSNINLEKVAKQLVDYLTNKLNEKTAALNKPEPSTVELNKVEQAKQKAVEKLVHEQVVFQPREKVVQQPKEVVAKPYFEESDDLLTSVSNKPKQPTSELLDFLVQQVVDGEEDDLPPPTNFDKWPNQNVRQKLDEINQVEAQRFNQTQFVPPQSLNQVETPNQRLFLEPEIQVQPQALYTASREHEQVQPKAQHQQPTTRIEREEVVNKFQREPLVSPNRLAYHSNKEFDDLYQNHYEQRTARINPQDSYYDQGYEQPDPYQEQQPYPQEQYLDPRYQQQVDPRYQKETYQEYNRPFPPNQEYDYYPPAYESRRDYQPYQPRRVNYEVRKPLAYEFSKQPAPRRYQQLPNRYNESDQSRQLAYPVHKGTLRTEADFLRFREGYGYDYDRPSTQYYRSNYDTYVREVRRPIRQLGMIEPVAEFRSRTLAPRRVARPTYGLRRVSRIPSLAPRGYNQQPRVRRVPVSRGYW.

The segment at 264–284 (QGYDQGYDQQYDQQGYDQQGY) is fibronectin-binding. Low complexity predominate over residues 326-335 (QQPVEVAKPA). Residues 326–351 (QQPVEVAKPAPTKPVGPKPQPGKKAT) are disordered. The segment covering 336–345 (PTKPVGPKPQ) has biased composition (pro residues). Residues 562–616 (EITKLEELVEIKTDNTESLNKLETLIDENKKIIDQFKQLKEEAKKSNSNINLEKV) adopt a coiled-coil conformation. Disordered stretches follow at residues 789 to 808 (SREH…TTRI) and 850 to 873 (RINP…EQQP). Positions 797–806 (PKAQHQQPTT) are enriched in polar residues. Over residues 862-873 (YEQPDPYQEQQP) the composition is skewed to low complexity.

The protein resides in the cell projection. Its subcellular location is the attachment organelle membrane. Functionally, binds immobilized fibronectin. Its function is as follows. Component of the cytoskeleton-like structure which stabilizes the shape of the wall-less mycoplasma. This cytoskeleton-like network of accessory proteins containing HMW proteins 1 to 5 allows the proper anchoring of cytadhesin proteins in the mycoplasmal membrane at the attachment organelle. Essential for successful surface parasitism. In Mycoplasmoides gallisepticum (strain R(low / passage 15 / clone 2)) (Mycoplasma gallisepticum), this protein is Cytadherence high molecular weight protein 3 (hlp3).